Here is a 303-residue protein sequence, read N- to C-terminus: Archaeosortase A (303 aa).

7 helical membrane passes run 3-23 (GLLSDILAWVVIGTFVAGAVA), 36-56 (TAAWVLFALFWLQLIPHFTLV), 60-80 (YIEGLLTIAAVPASLYAGWLL), 93-113 (AVAAMGVVYLPFETIPAFTLL), 169-189 (VVLACTGLGSIAIFAGLIAAV), 200-220 (LAIAVPIIYALNLLRTTFIAI), and 259-279 (LAVVALVGVTYLVVHEVPELL). C173 acts as the Acyl-thioester intermediate in catalysis. Catalysis depends on R214, which acts as the Proton donor.

It belongs to the exosortase/archaeosortase family. Archaeosortase A subfamily.

It localises to the cell membrane. Its function is as follows. Transpeptidase that recognizes and modifies its substrate by proteolytic cleavage of a sorting signal. Following cleavage, a covalent intermediate is formed via a thioester bond between the archaeosortase and its substrate, which is then transferred and covalently attached to the cell membrane. This sortase recognizes a tripartite structure consisting of a conserved Pro-Gly-Phe (PGF) motif, followed by a transmembrane alpha helix domain and a cluster of basic residues, usually at the C-terminus of target proteins. Confirmed substrates include the cell surface S-layer glycoprotein Csg and HVO_0405. ArtA is required for the C-terminal processing of Csg and for its lipidation and attachment to the archaeal plasma membrane. It is also required for the processing of HVO_0405, which contains an atypical central tripartite structure. The protein is Archaeosortase A of Haloferax volcanii (strain ATCC 29605 / DSM 3757 / JCM 8879 / NBRC 14742 / NCIMB 2012 / VKM B-1768 / DS2) (Halobacterium volcanii).